The following is a 109-amino-acid chain: Red pigment-concentrating prohormone (109 aa).

The signal sequence occupies residues 1-25 (MVRRSGVTLLVVALLVVTLMSSVSA). Gln-26 carries the pyrrolidone carboxylic acid modification. Trp-33 bears the Tryptophan amide mark. The segment at 34–78 (GKRAAGASGSNGGVGEAVSGLHPSVGGAPGGVVPPGSSSPGDSCG) is disordered. Composition is skewed to low complexity over residues 49–59 (EAVSGLHPSVG) and 67–78 (PPGSSSPGDSCG).

This sequence belongs to the AKH/HRTH/RPCH family.

The protein resides in the secreted. Functionally, this hormone adapts the animal to light backgrounds by stimulating concentration of the pigment of its red body-chromatophores. This Callinectes sapidus (Blue crab) protein is Red pigment-concentrating prohormone.